We begin with the raw amino-acid sequence, 367 residues long: Phospho-N-acetylmuramoyl-pentapeptide-transferase (367 aa).

Helical transmembrane passes span 28-48 (GALM…IGWL), 75-95 (TMGG…WADL), 96-116 (TNAY…IGFI), 134-154 (FKLV…THTA), 175-195 (LMIN…VGSG), 206-226 (GLAI…AYVV), 243-263 (AGEI…FLWW), 271-291 (FMGD…AVAI), 295-315 (LVLA…MVQV), and 344-364 (TIVI…LATL).

Belongs to the glycosyltransferase 4 family. MraY subfamily. Mg(2+) is required as a cofactor.

The protein localises to the cell inner membrane. The enzyme catalyses UDP-N-acetyl-alpha-D-muramoyl-L-alanyl-gamma-D-glutamyl-meso-2,6-diaminopimeloyl-D-alanyl-D-alanine + di-trans,octa-cis-undecaprenyl phosphate = di-trans,octa-cis-undecaprenyl diphospho-N-acetyl-alpha-D-muramoyl-L-alanyl-D-glutamyl-meso-2,6-diaminopimeloyl-D-alanyl-D-alanine + UMP. The protein operates within cell wall biogenesis; peptidoglycan biosynthesis. Functionally, catalyzes the initial step of the lipid cycle reactions in the biosynthesis of the cell wall peptidoglycan: transfers peptidoglycan precursor phospho-MurNAc-pentapeptide from UDP-MurNAc-pentapeptide onto the lipid carrier undecaprenyl phosphate, yielding undecaprenyl-pyrophosphoryl-MurNAc-pentapeptide, known as lipid I. In Maricaulis maris (strain MCS10) (Caulobacter maris), this protein is Phospho-N-acetylmuramoyl-pentapeptide-transferase.